A 987-amino-acid polypeptide reads, in one-letter code: Ephrin type-B receptor 2 (987 aa).

An N-terminal signal peptide occupies residues 1 to 19; sequence MGPLWFCCLPLALLPLLAA. Over 20 to 544 the chain is Extracellular; that stretch reads VEETLMDSTT…QTSVQEKLPL (525 aa). Residues 21 to 203 enclose the Eph LBD domain; the sequence is EETLMDSTTA…FYRKCPRVIQ (183 aa). Disulfide bonds link cysteine 63–cysteine 185 and cysteine 98–cysteine 108. N-linked (GlcNAc...) asparagine glycans are attached at residues asparagine 266, asparagine 337, asparagine 429, asparagine 478, and asparagine 483. Fibronectin type-III domains are found at residues 325-435 and 436-531; these read IPSA…TNQA and APSA…TMTE. A helical membrane pass occupies residues 545 to 565; the sequence is IIGSSAAGLVFLIAVVVIIIV. The Cytoplasmic portion of the chain corresponds to 566 to 987; the sequence is CNRRGFERAD…QMNQIQSVEV (422 aa). A Protein kinase domain is found at 622–885; the sequence is VKIEQVIGAG…QIVNTLDKMI (264 aa). Residues 628 to 636 and lysine 654 contribute to the ATP site; that span reads IGAGEFGEV. Catalysis depends on aspartate 747, which acts as the Proton acceptor. Lysine 892 participates in a covalent cross-link: Glycyl lysine isopeptide (Lys-Gly) (interchain with G-Cter in ubiquitin). The SAM domain occupies 914–978; it reads TSFNTVDEWL…LNSIQVMRAQ (65 aa). Residues 985–987 carry the PDZ-binding motif; sequence VEV.

This sequence belongs to the protein kinase superfamily. Tyr protein kinase family. Ephrin receptor subfamily. Heterotetramer upon binding of the ligand. The heterotetramer is composed of an ephrin dimer and a receptor dimer. Oligomerization is probably required to induce biological responses. Post-translationally, ligand binding induces cleavage by matrix metalloproteinases (MMPs) such as MMP7/MMP9, producing an EphB2/N-terminal fragment (NTF) and a C-terminal long fragment (EphB2-LF). EphB2-LF is further cleaved by MMPs, producing EphB2/CTF1 which is further cleaved by the PS1/gamma-secretase producing EphB2/CTF2. In terms of processing, polyubiquitinated; ligand binding stimulates ubiquitination. Ubiquitinated by RNF186 at Lys-892, mainly through 'Lys-27'-linked polyubiquitin chains.

The protein resides in the cell membrane. The protein localises to the cell projection. Its subcellular location is the axon. It is found in the dendrite. It catalyses the reaction L-tyrosyl-[protein] + ATP = O-phospho-L-tyrosyl-[protein] + ADP + H(+). Its function is as follows. Receptor tyrosine kinase which binds promiscuously transmembrane ephrin-B family ligands residing on adjacent cells, leading to contact-dependent bidirectional signaling into neighboring cells. The signaling pathway downstream of the receptor is referred to as forward signaling while the signaling pathway downstream of the ephrin ligand is referred to as reverse signaling. Functions in axon guidance during development. In addition to axon guidance, also regulates dendritic spines development and maturation and stimulates the formation of excitatory synapses. This chain is Ephrin type-B receptor 2 (EPHB2), found in Coturnix japonica (Japanese quail).